The following is a 285-amino-acid chain: Phosphoribosylaminoimidazole-succinocarboxamide synthase (285 aa).

It belongs to the SAICAR synthetase family.

It catalyses the reaction 5-amino-1-(5-phospho-D-ribosyl)imidazole-4-carboxylate + L-aspartate + ATP = (2S)-2-[5-amino-1-(5-phospho-beta-D-ribosyl)imidazole-4-carboxamido]succinate + ADP + phosphate + 2 H(+). The protein operates within purine metabolism; IMP biosynthesis via de novo pathway; 5-amino-1-(5-phospho-D-ribosyl)imidazole-4-carboxamide from 5-amino-1-(5-phospho-D-ribosyl)imidazole-4-carboxylate: step 1/2. This Leptospira interrogans serogroup Icterohaemorrhagiae serovar copenhageni (strain Fiocruz L1-130) protein is Phosphoribosylaminoimidazole-succinocarboxamide synthase.